The following is a 91-amino-acid chain: Small ribosomal subunit protein uS17 (91 aa).

This sequence belongs to the universal ribosomal protein uS17 family. Part of the 30S ribosomal subunit.

Functionally, one of the primary rRNA binding proteins, it binds specifically to the 5'-end of 16S ribosomal RNA. The chain is Small ribosomal subunit protein uS17 from Psychrobacter cryohalolentis (strain ATCC BAA-1226 / DSM 17306 / VKM B-2378 / K5).